The following is a 268-amino-acid chain: ELL-associated factor 1 (268 aa).

A disordered region spans residues 106–268; sequence IQVKKTRAEG…LSESGSDSDD (163 aa). Over residues 128-154 the composition is skewed to pro residues; that stretch reads ARPPQPSQPPPPPPPMPFRAPTKPPAG. Residue Ser165 is modified to Phosphoserine. Over residues 171 to 181 the composition is skewed to basic and acidic residues; the sequence is DDIKRELRAEV. The interval 182 to 262 is necessary for transactivation activity; that stretch reads DIIEQMSSSS…LRNDLQLSES (81 aa). A compositionally biased stretch (low complexity) spans 188 to 203; that stretch reads SSSSGSSSSDSESSSG. The segment covering 238–268 has biased composition (polar residues); the sequence is NGTSRPQGSSQLMNTLRNDLQLSESGSDSDD.

It belongs to the EAF family. Component of the super elongation complex (SEC), at least composed of EAF1, EAF2, CDK9, MLLT3/AF9, AFF (AFF1 or AFF4), the P-TEFb complex and ELL (ELL, ELL2 or ELL3). Interacts with ELL and ELL2.

Its subcellular location is the nucleus speckle. The protein localises to the nucleus. It localises to the cajal body. In terms of biological role, acts as a transcriptional transactivator of ELL and ELL2 elongation activities. The polypeptide is ELL-associated factor 1 (Eaf1) (Mus musculus (Mouse)).